Here is a 643-residue protein sequence, read N- to C-terminus: Phosphomethylpyrimidine synthase (643 aa).

Residues Asn-248, Met-277, Tyr-306, His-342, 362-364, 403-406, and Glu-442 contribute to the substrate site; these read SRG and DGLR. His-446 serves as a coordination point for Zn(2+). Tyr-469 is a binding site for substrate. His-510 is a Zn(2+) binding site. [4Fe-4S] cluster is bound by residues Cys-590, Cys-593, and Cys-598.

This sequence belongs to the ThiC family. As to quaternary structure, homodimer. The cofactor is [4Fe-4S] cluster.

The catalysed reaction is 5-amino-1-(5-phospho-beta-D-ribosyl)imidazole + S-adenosyl-L-methionine = 4-amino-2-methyl-5-(phosphooxymethyl)pyrimidine + CO + 5'-deoxyadenosine + formate + L-methionine + 3 H(+). It functions in the pathway cofactor biosynthesis; thiamine diphosphate biosynthesis. Its function is as follows. Catalyzes the synthesis of the hydroxymethylpyrimidine phosphate (HMP-P) moiety of thiamine from aminoimidazole ribotide (AIR) in a radical S-adenosyl-L-methionine (SAM)-dependent reaction. In Burkholderia multivorans (strain ATCC 17616 / 249), this protein is Phosphomethylpyrimidine synthase.